The primary structure comprises 549 residues: NADH-quinone oxidoreductase subunit N (549 aa).

Helical transmembrane passes span Leu26 to Val46, Ala57 to Leu77, Pro96 to Ala116, His148 to Ala168, Phe171 to Leu191, Tyr206 to Gly226, Leu253 to Phe273, Leu297 to Ala317, Pro321 to Gln341, Leu347 to Asn367, Met375 to Val395, Ala421 to Ile441, Ser466 to Ala486, and Gly496 to Leu516.

This sequence belongs to the complex I subunit 2 family. In terms of assembly, NDH-1 is composed of 14 different subunits. Subunits NuoA, H, J, K, L, M, N constitute the membrane sector of the complex.

The protein resides in the cell membrane. The enzyme catalyses a quinone + NADH + 5 H(+)(in) = a quinol + NAD(+) + 4 H(+)(out). In terms of biological role, NDH-1 shuttles electrons from NADH, via FMN and iron-sulfur (Fe-S) centers, to quinones in the respiratory chain. The immediate electron acceptor for the enzyme in this species is believed to be a menaquinone. Couples the redox reaction to proton translocation (for every two electrons transferred, four hydrogen ions are translocated across the cytoplasmic membrane), and thus conserves the redox energy in a proton gradient. In Thermobifida fusca (strain YX), this protein is NADH-quinone oxidoreductase subunit N.